The primary structure comprises 469 residues: Glutamate--tRNA ligase (469 aa).

A 'HIGH' region motif is present at residues 11 to 21 (PSPTGFIHLGN). Residues 243 to 247 (KMSKR) carry the 'KMSKS' region motif. ATP is bound at residue lysine 246.

It belongs to the class-I aminoacyl-tRNA synthetase family. Glutamate--tRNA ligase type 1 subfamily. In terms of assembly, monomer.

Its subcellular location is the cytoplasm. The enzyme catalyses tRNA(Glu) + L-glutamate + ATP = L-glutamyl-tRNA(Glu) + AMP + diphosphate. In terms of biological role, catalyzes the attachment of glutamate to tRNA(Glu) in a two-step reaction: glutamate is first activated by ATP to form Glu-AMP and then transferred to the acceptor end of tRNA(Glu). This is Glutamate--tRNA ligase from Burkholderia orbicola (strain AU 1054).